A 711-amino-acid polypeptide reads, in one-letter code: Ribosomal RNA large subunit methyltransferase K/L (711 aa).

Residues 42–153 form the THUMP domain; it reads DAQRAVLWSR…KGRATISVDL (112 aa).

It belongs to the methyltransferase superfamily. RlmKL family.

It localises to the cytoplasm. The catalysed reaction is guanosine(2445) in 23S rRNA + S-adenosyl-L-methionine = N(2)-methylguanosine(2445) in 23S rRNA + S-adenosyl-L-homocysteine + H(+). The enzyme catalyses guanosine(2069) in 23S rRNA + S-adenosyl-L-methionine = N(2)-methylguanosine(2069) in 23S rRNA + S-adenosyl-L-homocysteine + H(+). Its function is as follows. Specifically methylates the guanine in position 2445 (m2G2445) and the guanine in position 2069 (m7G2069) of 23S rRNA. This is Ribosomal RNA large subunit methyltransferase K/L from Xanthomonas oryzae pv. oryzae (strain KACC10331 / KXO85).